The primary structure comprises 90 residues: Acyl-CoA-binding protein (90 aa).

The segment covering 1–16 (MGLKEDFEEHAEKAKT) has biased composition (basic and acidic residues). Positions 1-20 (MGLKEDFEEHAEKAKTLPEN) are disordered. One can recognise an ACB domain in the interval 3–88 (LKEDFEEHAE…VKQLLGEAAA (86 aa)). Residues 30-34 (YGLYK), K56, and Y75 contribute to the an acyl-CoA site.

Belongs to the ACBP family.

Its function is as follows. Binds medium- and long-chain acyl-CoA esters with very high affinity and may function as an intracellular carrier of acyl-CoA esters. The protein is Acyl-CoA-binding protein of Ricinus communis (Castor bean).